The following is a 756-amino-acid chain: Probable chemoreceptor y4sI (756 aa).

The next 2 membrane-spanning stretches (helical) occupy residues 26-46 and 330-350; these read VCVAVLSCTTVATFAGITSVA and LIKIIGITAATAILALAMAIL. HAMP domains are found at residues 353-406 and 434-486; these read RSIS…ARVA and DEQA…ETIR. Positions 491–720 constitute a Methyl-accepting transducer domain; it reads QAASMSSIVS…ESDAACRSLN (230 aa). The tract at residues 736–756 is disordered; it reads GGGSSTRQPQSPPTQRYFMSR.

This sequence belongs to the methyl-accepting chemotaxis (MCP) protein family.

It is found in the cell membrane. Its function is as follows. Chemotactic-signal transducers respond to changes in the concentration of attractants and repellents in the environment, transduce a signal from the outside to the inside of the cell, and facilitate sensory adaptation through the variation of the level of methylation. Attractants increase the level of methylation while repellents decrease the level of methylation. In Sinorhizobium fredii (strain NBRC 101917 / NGR234), this protein is Probable chemoreceptor y4sI.